The following is a 131-amino-acid chain: Profilin-1 (131 aa).

It belongs to the profilin family. In terms of assembly, occurs in many kinds of cells as a complex with monomeric actin in a 1:1 ratio.

It localises to the cytoplasm. The protein localises to the cytoskeleton. Its function is as follows. Binds to actin and affects the structure of the cytoskeleton. At high concentrations, profilin prevents the polymerization of actin, whereas it enhances it at low concentrations. By binding to PIP2, it inhibits the formation of IP3 and DG. The chain is Profilin-1 from Malus domestica (Apple).